The chain runs to 562 residues: NAD-dependent malic enzyme (562 aa).

Catalysis depends on tyrosine 101, which acts as the Proton donor. Arginine 154 contacts NAD(+). The active-site Proton acceptor is the lysine 172. A divalent metal cation-binding residues include glutamate 243, aspartate 244, and aspartate 267. Aspartate 267 and asparagine 415 together coordinate NAD(+).

It belongs to the malic enzymes family. As to quaternary structure, homotetramer. Mg(2+) is required as a cofactor. It depends on Mn(2+) as a cofactor.

It carries out the reaction (S)-malate + NAD(+) = pyruvate + CO2 + NADH. It catalyses the reaction oxaloacetate + H(+) = pyruvate + CO2. The polypeptide is NAD-dependent malic enzyme (Shewanella sediminis (strain HAW-EB3)).